Consider the following 396-residue polypeptide: Ribosomal RNA large subunit methyltransferase I (396 aa).

The PUA domain occupies 2–81; the sequence is SVRLVLAKGR…ESIDIAFFSR (80 aa).

This sequence belongs to the methyltransferase superfamily. RlmI family.

It localises to the cytoplasm. The catalysed reaction is cytidine(1962) in 23S rRNA + S-adenosyl-L-methionine = 5-methylcytidine(1962) in 23S rRNA + S-adenosyl-L-homocysteine + H(+). Functionally, specifically methylates the cytosine at position 1962 (m5C1962) of 23S rRNA. The chain is Ribosomal RNA large subunit methyltransferase I from Escherichia coli (strain K12 / MC4100 / BW2952).